The primary structure comprises 34 residues: NU-buthitoxin-Ptr1a (34 aa).

Disulfide bonds link Cys6–Cys27, Cys12–Cys32, and Cys16–Cys34.

In terms of tissue distribution, expressed by the venom gland.

It localises to the secreted. In terms of biological role, toxin that acts as an agonist on melanocortin receptors (MC1R, MC3R, MC5R, MC5R). After binding to MC1R, the peptide activates the hMC1R/Gs pathway, but after binding to MC4R, it is not able to activate or antagonize the MC4R/Gs pathway. Inhibits melanocyte stimulating hormone (MSH)-binding to human receptors (Ki=2.9 uM to MC1R, Ki=3.9 uM to MC3R, Ki=2.6 uM to MC4R, Ki=2.2 uM to MC5R). This toxin is structurally unrelated to the natural agonists. This chain is NU-buthitoxin-Ptr1a, found in Parabuthus transvaalicus (Transvaal thick-tailed scorpion).